Reading from the N-terminus, the 81-residue chain is Large ribosomal subunit protein bL31B (81 aa).

This sequence belongs to the bacterial ribosomal protein bL31 family. Type B subfamily. Part of the 50S ribosomal subunit.

The protein is Large ribosomal subunit protein bL31B of Listeria innocua serovar 6a (strain ATCC BAA-680 / CLIP 11262).